A 226-amino-acid polypeptide reads, in one-letter code: MNNHGLKLDNIRRAFKQGKDDLEVLKGANLEIRAGEIVALVGPSGAGKSTLLHIAGLLERPDGGEVFLAGNPAGALGEKERTQLRRLHLGFVYQYHHLLPEFSAIENVVLPQMIAGVPQAKARERAMELLGRMKLAERAEHRPGQLSGGEQQRVAICRALANAPRVLLADEPTGNLDPHTADGVFDELIRLVKGSGVAALIATHNPDLAARMDRVVKMSEGLLVEV.

The ABC transporter domain maps to 6-226 (LKLDNIRRAF…KMSEGLLVEV (221 aa)). An ATP-binding site is contributed by 42–49 (GPSGAGKS).

It belongs to the ABC transporter superfamily. Lipoprotein translocase (TC 3.A.1.125) family. In terms of assembly, the complex is composed of two ATP-binding proteins (LolD) and two transmembrane proteins (LolC and LolE).

It is found in the cell inner membrane. In terms of biological role, part of the ABC transporter complex LolCDE involved in the translocation of mature outer membrane-directed lipoproteins, from the inner membrane to the periplasmic chaperone, LolA. Responsible for the formation of the LolA-lipoprotein complex in an ATP-dependent manner. The polypeptide is Lipoprotein-releasing system ATP-binding protein LolD (Paramagnetospirillum magneticum (strain ATCC 700264 / AMB-1) (Magnetospirillum magneticum)).